Consider the following 476-residue polypeptide: Exodeoxyribonuclease 7 large subunit (476 aa).

This sequence belongs to the XseA family. As to quaternary structure, heterooligomer composed of large and small subunits.

It is found in the cytoplasm. It carries out the reaction Exonucleolytic cleavage in either 5'- to 3'- or 3'- to 5'-direction to yield nucleoside 5'-phosphates.. Bidirectionally degrades single-stranded DNA into large acid-insoluble oligonucleotides, which are then degraded further into small acid-soluble oligonucleotides. This Bartonella tribocorum (strain CIP 105476 / IBS 506) protein is Exodeoxyribonuclease 7 large subunit.